Consider the following 217-residue polypeptide: GrpE protein homolog 1, mitochondrial (217 aa).

Residues 1–27 constitute a mitochondrion transit peptide; it reads MAAQCVRLARRSLPALALSLRPSPRLL. A disordered region spans residues 29–56; it reads TATKQKNSGQNLEEDMGQSEQKADPPAT. The segment covering 30 to 39 has biased composition (polar residues); the sequence is ATKQKNSGQN. Lys-94 is subject to N6-acetyllysine; alternate. N6-succinyllysine; alternate is present on Lys-94. N6-acetyllysine is present on Lys-100. Lys-120 carries the post-translational modification N6-succinyllysine. At Lys-215 the chain carries N6-acetyllysine; alternate. The residue at position 215 (Lys-215) is an N6-succinyllysine; alternate.

The protein belongs to the GrpE family. As to quaternary structure, probable component of the PAM complex at least composed of a mitochondrial HSP70 protein, GRPEL1 or GRPEL2, TIMM44, TIMM16/PAM16 and TIMM14/DNAJC19. Binds to HSP70, HSC70 and HSJ1B.

Its subcellular location is the mitochondrion matrix. Essential component of the PAM complex, a complex required for the translocation of transit peptide-containing proteins from the inner membrane into the mitochondrial matrix in an ATP-dependent manner. Seems to control the nucleotide-dependent binding of mitochondrial HSP70 to substrate proteins. The sequence is that of GrpE protein homolog 1, mitochondrial (GRPEL1) from Homo sapiens (Human).